A 160-amino-acid polypeptide reads, in one-letter code: Type-1 angiotensin II receptor-associated protein (160 aa).

Residues 1-9 (MELPAVNLK) are Extracellular-facing. A helical membrane pass occupies residues 10-30 (VILLVHWLLTTWGCLAFSGSY). The Cytoplasmic portion of the chain corresponds to 31–53 (AWGNFTILALGVWAVAQRDSVDA). A helical membrane pass occupies residues 54-74 (IGMFLGGLVATIFLDIIYISI). Residues 75–86 (FYSSVAVGDTGR) lie on the Extracellular side of the membrane. Residues 87–107 (FSAGMAIFSLLLKPFSCCLVY) traverse the membrane as a helical segment. The Cytoplasmic portion of the chain corresponds to 108–160 (HMHRERGGELPLRSDFFGPSQEHSAYQTIDSSDSPADPLASLENKGQAAPRGY). Positions 110–122 (HRERGGELPLRSD) are interaction with AGTR1. Position 127 is a phosphoserine (serine 127). The interval 128–160 (QEHSAYQTIDSSDSPADPLASLENKGQAAPRGY) is disordered. Threonine 135 carries the post-translational modification Phosphothreonine. A compositionally biased stretch (low complexity) spans 137-149 (DSSDSPADPLASL). Position 138 is a phosphoserine (serine 138).

In terms of assembly, interacts with RACK1, and with the carboxy-terminal region of AGTR1.

The protein resides in the endoplasmic reticulum membrane. It is found in the golgi apparatus membrane. Its subcellular location is the cytoplasmic vesicle membrane. Its function is as follows. Appears to be a negative regulator of type-1 angiotensin II receptor-mediated signaling by regulating receptor internalization as well as mechanism of receptor desensitization such as phosphorylation. May play a role of negative regulator in cardiomyocyte hypertrophy induced by angiotensin II through an inhibition of p38 mitogen-activated protein kinase pathway. Attenuates type-1 angiotensin II receptor growth promoting effect and angiotensin II-induced phosphorylation of protein kinase AKT and of STAT3. This chain is Type-1 angiotensin II receptor-associated protein (Agtrap), found in Rattus norvegicus (Rat).